The sequence spans 284 residues: Bifunctional protein FolD (284 aa).

NADP(+) is bound by residues 164 to 166 (GRS) and S189.

This sequence belongs to the tetrahydrofolate dehydrogenase/cyclohydrolase family. Homodimer.

It catalyses the reaction (6R)-5,10-methylene-5,6,7,8-tetrahydrofolate + NADP(+) = (6R)-5,10-methenyltetrahydrofolate + NADPH. The enzyme catalyses (6R)-5,10-methenyltetrahydrofolate + H2O = (6R)-10-formyltetrahydrofolate + H(+). It functions in the pathway one-carbon metabolism; tetrahydrofolate interconversion. Functionally, catalyzes the oxidation of 5,10-methylenetetrahydrofolate to 5,10-methenyltetrahydrofolate and then the hydrolysis of 5,10-methenyltetrahydrofolate to 10-formyltetrahydrofolate. The protein is Bifunctional protein FolD of Listeria innocua serovar 6a (strain ATCC BAA-680 / CLIP 11262).